Here is a 281-residue protein sequence, read N- to C-terminus: 2-dehydro-3-deoxyphosphooctonate aldolase (281 aa).

Belongs to the KdsA family.

The protein resides in the cytoplasm. The catalysed reaction is D-arabinose 5-phosphate + phosphoenolpyruvate + H2O = 3-deoxy-alpha-D-manno-2-octulosonate-8-phosphate + phosphate. It participates in carbohydrate biosynthesis; 3-deoxy-D-manno-octulosonate biosynthesis; 3-deoxy-D-manno-octulosonate from D-ribulose 5-phosphate: step 2/3. It functions in the pathway bacterial outer membrane biogenesis; lipopolysaccharide biosynthesis. The protein is 2-dehydro-3-deoxyphosphooctonate aldolase of Pseudomonas syringae pv. syringae (strain B728a).